Reading from the N-terminus, the 162-residue chain is 2-C-methyl-D-erythritol 2,4-cyclodiphosphate synthase (162 aa).

Positions 12 and 14 each coordinate a divalent metal cation. 4-CDP-2-C-methyl-D-erythritol 2-phosphate-binding positions include 12–14 and 38–39; these read DVH and HS. His-46 contributes to the a divalent metal cation binding site. 4-CDP-2-C-methyl-D-erythritol 2-phosphate-binding positions include 60–62, 65–69, and Arg-146; these read DIG and FPDTD.

The protein belongs to the IspF family. In terms of assembly, homotrimer. The cofactor is a divalent metal cation.

It carries out the reaction 4-CDP-2-C-methyl-D-erythritol 2-phosphate = 2-C-methyl-D-erythritol 2,4-cyclic diphosphate + CMP. The protein operates within isoprenoid biosynthesis; isopentenyl diphosphate biosynthesis via DXP pathway; isopentenyl diphosphate from 1-deoxy-D-xylulose 5-phosphate: step 4/6. In terms of biological role, involved in the biosynthesis of isopentenyl diphosphate (IPP) and dimethylallyl diphosphate (DMAPP), two major building blocks of isoprenoid compounds. Catalyzes the conversion of 4-diphosphocytidyl-2-C-methyl-D-erythritol 2-phosphate (CDP-ME2P) to 2-C-methyl-D-erythritol 2,4-cyclodiphosphate (ME-CPP) with a corresponding release of cytidine 5-monophosphate (CMP). This is 2-C-methyl-D-erythritol 2,4-cyclodiphosphate synthase from Bordetella parapertussis (strain 12822 / ATCC BAA-587 / NCTC 13253).